The primary structure comprises 131 residues: uncharacterized protein (131 aa).

This is an uncharacterized protein from Haemophilus influenzae (strain ATCC 51907 / DSM 11121 / KW20 / Rd).